A 466-amino-acid polypeptide reads, in one-letter code: 3-isopropylmalate dehydratase large subunit (466 aa).

Positions 347, 407, and 410 each coordinate [4Fe-4S] cluster.

It belongs to the aconitase/IPM isomerase family. LeuC type 1 subfamily. As to quaternary structure, heterodimer of LeuC and LeuD. The cofactor is [4Fe-4S] cluster.

It catalyses the reaction (2R,3S)-3-isopropylmalate = (2S)-2-isopropylmalate. The protein operates within amino-acid biosynthesis; L-leucine biosynthesis; L-leucine from 3-methyl-2-oxobutanoate: step 2/4. In terms of biological role, catalyzes the isomerization between 2-isopropylmalate and 3-isopropylmalate, via the formation of 2-isopropylmaleate. In Pectobacterium carotovorum subsp. carotovorum (strain PC1), this protein is 3-isopropylmalate dehydratase large subunit.